A 415-amino-acid polypeptide reads, in one-letter code: Serine hydroxymethyltransferase (415 aa).

Residues Leu121 and Gly125–Leu127 each bind (6S)-5,6,7,8-tetrahydrofolate. Lys230 bears the N6-(pyridoxal phosphate)lysine mark. (6S)-5,6,7,8-tetrahydrofolate is bound by residues Glu246 and Ser354 to Phe356.

Belongs to the SHMT family. In terms of assembly, homodimer. Pyridoxal 5'-phosphate serves as cofactor.

The protein resides in the cytoplasm. It catalyses the reaction (6R)-5,10-methylene-5,6,7,8-tetrahydrofolate + glycine + H2O = (6S)-5,6,7,8-tetrahydrofolate + L-serine. It functions in the pathway one-carbon metabolism; tetrahydrofolate interconversion. It participates in amino-acid biosynthesis; glycine biosynthesis; glycine from L-serine: step 1/1. In terms of biological role, catalyzes the reversible interconversion of serine and glycine with tetrahydrofolate (THF) serving as the one-carbon carrier. This reaction serves as the major source of one-carbon groups required for the biosynthesis of purines, thymidylate, methionine, and other important biomolecules. Also exhibits THF-independent aldolase activity toward beta-hydroxyamino acids, producing glycine and aldehydes, via a retro-aldol mechanism. This is Serine hydroxymethyltransferase from Bdellovibrio bacteriovorus (strain ATCC 15356 / DSM 50701 / NCIMB 9529 / HD100).